Consider the following 202-residue polypeptide: Small ribosomal subunit protein uS4 (202 aa).

The span at 1 to 13 (MSRYRGPRLRITR) shows a compositional bias: basic residues. Residues 1-43 (MSRYRGPRLRITRRLGDLPGLTRKAAKRSHPPGQHGQARRKRS) form a disordered region. One can recognise an S4 RNA-binding domain in the interval 90–152 (NRLDNVCFRL…KGSKKLAEAN (63 aa)).

It belongs to the universal ribosomal protein uS4 family. Part of the 30S ribosomal subunit. Contacts protein S5. The interaction surface between S4 and S5 is involved in control of translational fidelity.

One of the primary rRNA binding proteins, it binds directly to 16S rRNA where it nucleates assembly of the body of the 30S subunit. Its function is as follows. With S5 and S12 plays an important role in translational accuracy. The sequence is that of Small ribosomal subunit protein uS4 from Prochlorococcus marinus (strain MIT 9303).